The primary structure comprises 252 residues: Triosephosphate isomerase (252 aa).

10 to 12 (NWK) is a substrate binding site. The active-site Electrophile is histidine 96. The Proton acceptor role is filled by glutamate 168. Residues glycine 174, serine 214, and 235–236 (GG) each bind substrate.

It belongs to the triosephosphate isomerase family. In terms of assembly, homodimer.

The protein resides in the cytoplasm. The catalysed reaction is D-glyceraldehyde 3-phosphate = dihydroxyacetone phosphate. It participates in carbohydrate biosynthesis; gluconeogenesis. Its pathway is carbohydrate degradation; glycolysis; D-glyceraldehyde 3-phosphate from glycerone phosphate: step 1/1. Involved in the gluconeogenesis. Catalyzes stereospecifically the conversion of dihydroxyacetone phosphate (DHAP) to D-glyceraldehyde-3-phosphate (G3P). The polypeptide is Triosephosphate isomerase (Streptococcus pyogenes serotype M5 (strain Manfredo)).